Reading from the N-terminus, the 1010-residue chain is MFKKSRHLKNVSNAIKSARVHDVSNGINSKFFDTKKICTYGINGRITVTTFDYTQSLLAVATTAGEIHVYGQKQIEVVFTLKNRPQIKHMRFIKGIYLIAVDEKSNIIVLSVHSKQILTTVFCPNSITCIETDPSLDWMLIGLESGSILIYDVDRNQMSKLKIENFQKSVFLPKERLSPVISIQWNPRDIGTILISYEHITVIYSFIDYKVKQHFFYQLEPYAPGGDLSTNIEKKRTPKVIQSLYHPNSLHILTVHEDNSLVFWDVNSGKLIHARSIFETHVNFPNPALKDCSFTETPAIFKVSWLCQRNPEYTSLLIATKATENPCLPQEITMIDLGGTPMYSVTSFDAMSKYYAKPVQQKLFSLIGKAPLINFLPLPKASPYFGGCHDTNLILLLLEDGELETLIYPAGSFSSKASIFPRSLAWVRPTVTTCIAQSVQKNLWLGMMTIAQSESFLKGGIPATRNIRRHETRSALLTGHSNGSVRIWDASHSEVTDNAVFEVNTAKVLNRATNLAIKNISFASETLELAVSSEVGDVILFKFETNKFYGQLPKSDALQLKFSRFSLDDSKTILVDVSDRGPTNVKQGFIPSTVIHAKKGAVSAIMNSNIGFVAVGFIEGTLIILDRRGPAIIFNENIRVISKAGSSYVSTVHFCVMEYGDDGFSSILMLCGTDIGELMTFKILPATNGRFEVKFTDATKTNNQGKILGINSFAKDTGYSCSATISKMQGLSKGIAIPGFVTISGANDIRLVSPGKSKDTHALFKYPIATSGLSFIPIIDGKGERKLSTIMIVLLINGDIKVLTVPELKEVKNLRCPVPLSAQYVENSSILENGDIVIRTGKFQASLISVLNESATGTNHTADISQHTPIDTLYNPDLKIGYRPQVNSLQWARGTIYCTPYQLDELLGGIERPESKYEESAIARGCISSSSSNAARKLPPGTEDHRYARPVRSSGRSNGYGVLKSVSRAIETRLDTVETTINDYATTMGQTMNDAMEETGRDMMKSAVGF.

WD repeat units follow at residues Thr47–Thr80, Ile87–Phe122, Ile127–Ile163, Ser182–Phe215, Val240–Arg275, Ala299–Phe364, Leu372–Ile407, Val431–Asn504, Lys518–Ile595, Val602–Asn637, Val649–Lys700, Gly709–Leu763, Ile768–Arg815, and Ser829–Asn852. A disordered region spans residues Ser932–Asn958.

Belongs to the WD repeat L(2)GL family. In terms of assembly, interacts with SEC9.

Functionally, acts as an allosteric regulator of polarized exocytosis by promoting the targeted fusion of vesicles with the plasma membrane. Involved in maintenance of ion homeostasis in cells exposed to NaCl stress. May be involved in the targeting of the myosin proteins to their intrinsic pathways. Multicopy suppressor of RHO3. May also participate in the maintenance of cell polarity and bud growth. The chain is Lethal(2) giant larvae protein homolog SRO77 (SRO77) from Saccharomyces cerevisiae (strain ATCC 204508 / S288c) (Baker's yeast).